We begin with the raw amino-acid sequence, 67 residues long: DNA-directed RNA polymerase subunit omega (67 aa).

Belongs to the RNA polymerase subunit omega family. As to quaternary structure, the RNAP catalytic core consists of 2 alpha, 1 beta, 1 beta' and 1 omega subunit. When a sigma factor is associated with the core the holoenzyme is formed, which can initiate transcription.

It carries out the reaction RNA(n) + a ribonucleoside 5'-triphosphate = RNA(n+1) + diphosphate. In terms of biological role, promotes RNA polymerase assembly. Latches the N- and C-terminal regions of the beta' subunit thereby facilitating its interaction with the beta and alpha subunits. This is DNA-directed RNA polymerase subunit omega from Listeria monocytogenes serotype 4b (strain F2365).